The chain runs to 66 residues: UPF0434 protein RPC_0266 (66 aa).

This sequence belongs to the UPF0434 family.

The polypeptide is UPF0434 protein RPC_0266 (Rhodopseudomonas palustris (strain BisB18)).